Reading from the N-terminus, the 239-residue chain is Vesicle-associated protein 1-3 (239 aa).

Met1 is subject to N-acetylmethionine. Thr2 bears the N-acetylthreonine; in Vesicle-associated protein 1-3, N-terminally processed mark. Residues 2-215 are Cytoplasmic-facing; the sequence is TTGDLVNIHP…RKETSKKQSG (214 aa). The MSP domain maps to 6 to 127; the sequence is LVNIHPTELK…EDFKLRVVYI (122 aa). 2 positions are modified to phosphoserine: Ser133 and Ser164. The stretch at 179–214 forms a coiled coil; sequence SMISKLTEEKTSATQQSQKLRLELEMLRKETSKKQS. Residues 216 to 236 form a helical; Anchor for type IV membrane protein membrane-spanning segment; it reads GHSLLLMLLVGLLGCVIGYLL.

It belongs to the VAMP-associated protein (VAP) (TC 9.B.17) family.

The protein resides in the endoplasmic reticulum membrane. Functionally, may play a role in vesicle trafficking. This chain is Vesicle-associated protein 1-3 (PVA13), found in Arabidopsis thaliana (Mouse-ear cress).